The following is a 177-amino-acid chain: T-cell receptor beta chain C region (177 aa).

The c region stretch occupies residues 1 to 150; it reads EDLANVSAPQ…GVLSATVLYE (150 aa). 2 N-linked (GlcNAc...) asparagine glycosylation sites follow: Asn5 and Asn22. A disulfide bridge links Cys31 with Cys96. Residues 146 to 168 form a helical membrane-spanning segment; sequence TVLYEILLGKATLYAVLVSALVL. Residues 169–177 lie on the Cytoplasmic side of the membrane; sequence MAMVKRKDS.

The protein resides in the membrane. This Oryctolagus cuniculus (Rabbit) protein is T-cell receptor beta chain C region.